The chain runs to 351 residues: C(7)-cyclitol 7-kinase (351 aa).

The protein belongs to the ROK (NagC/XylR) family.

The enzyme catalyses valienone + ATP = valienone 7-phosphate + ADP + H(+). The catalysed reaction is validone + ATP = validone 7-phosphate + ADP + H(+). Involved in the biosynthesis of the antifungal agent validamycin A. Catalyzes the phosphorylation of valienone and validone to their 7-phosphate derivatives. The sequence is that of C(7)-cyclitol 7-kinase from Streptomyces hygroscopicus subsp. jinggangensis (strain 5008).